We begin with the raw amino-acid sequence, 328 residues long: Nickel import system permease protein NikB (328 aa).

6 consecutive transmembrane segments (helical) span residues 11–31, 104–124, 139–159, 170–190, 229–249, and 279–299; these read LMQMIVVLFVISTLTFILMKL, LLISFSTLVVSLCISIPLGII, VISTLSISLPAFFIGIILLFI, ILSQFILPVITLSLGMCAYII, ILPIIPLLGISLGSLIGGTVV, and VLFIGFFVVIINTIADLLTLL. Residues 100–297 enclose the ABC transmembrane type-1 domain; sequence APITLLISFS…IINTIADLLT (198 aa).

This sequence belongs to the binding-protein-dependent transport system permease family. OppBC subfamily. As to quaternary structure, the complex is composed of two ATP-binding proteins (NikD and NikE), two transmembrane proteins (NikB and NikC) and a solute-binding protein (NikA).

Its subcellular location is the cell membrane. In terms of biological role, part of the ABC transporter complex NikABCDE (Opp2) involved in nickel import. Probably responsible for the translocation of the substrate across the membrane. The polypeptide is Nickel import system permease protein NikB (Staphylococcus aureus (strain Mu50 / ATCC 700699)).